The sequence spans 594 residues: Aspartate--tRNA ligase (594 aa).

Glu-171 contributes to the L-aspartate binding site. The interval 195 to 198 (QLFK) is aspartate. Arg-217 is a binding site for L-aspartate. ATP-binding positions include 217 to 219 (RDE) and Gln-226. His-449 contacts L-aspartate. Glu-483 provides a ligand contact to ATP. Residue Arg-490 coordinates L-aspartate. 535-538 (GLDR) provides a ligand contact to ATP.

Belongs to the class-II aminoacyl-tRNA synthetase family. Type 1 subfamily. As to quaternary structure, homodimer.

The protein resides in the cytoplasm. The enzyme catalyses tRNA(Asp) + L-aspartate + ATP = L-aspartyl-tRNA(Asp) + AMP + diphosphate. In terms of biological role, catalyzes the attachment of L-aspartate to tRNA(Asp) in a two-step reaction: L-aspartate is first activated by ATP to form Asp-AMP and then transferred to the acceptor end of tRNA(Asp). This is Aspartate--tRNA ligase from Proteus mirabilis (strain HI4320).